The sequence spans 545 residues: CTP synthase (545 aa).

Residues Met-1–Leu-266 form an amidoligase domain region. A CTP-binding site is contributed by Ser-14. Ser-14 provides a ligand contact to UTP. ATP-binding positions include Ser-15 to Ile-20 and Asp-72. Mg(2+)-binding residues include Asp-72 and Glu-140. CTP contacts are provided by residues Asp-147–Glu-149, Lys-187–Gln-192, and Lys-223. UTP contacts are provided by residues Lys-187–Gln-192 and Lys-223. ATP is bound at residue Lys-239–Val-241. A Glutamine amidotransferase type-1 domain is found at Thr-291–Arg-542. Gly-352 serves as a coordination point for L-glutamine. Cys-379 (nucleophile; for glutamine hydrolysis) is an active-site residue. L-glutamine contacts are provided by residues Leu-380–Gln-383, Glu-403, and Arg-470. Residues His-515 and Glu-517 contribute to the active site.

It belongs to the CTP synthase family. As to quaternary structure, homotetramer.

It carries out the reaction UTP + L-glutamine + ATP + H2O = CTP + L-glutamate + ADP + phosphate + 2 H(+). The enzyme catalyses L-glutamine + H2O = L-glutamate + NH4(+). It catalyses the reaction UTP + NH4(+) + ATP = CTP + ADP + phosphate + 2 H(+). The protein operates within pyrimidine metabolism; CTP biosynthesis via de novo pathway; CTP from UDP: step 2/2. Allosterically activated by GTP, when glutamine is the substrate; GTP has no effect on the reaction when ammonia is the substrate. The allosteric effector GTP functions by stabilizing the protein conformation that binds the tetrahedral intermediate(s) formed during glutamine hydrolysis. Inhibited by the product CTP, via allosteric rather than competitive inhibition. Functionally, catalyzes the ATP-dependent amination of UTP to CTP with either L-glutamine or ammonia as the source of nitrogen. Regulates intracellular CTP levels through interactions with the four ribonucleotide triphosphates. The chain is CTP synthase from Escherichia coli O127:H6 (strain E2348/69 / EPEC).